A 189-amino-acid polypeptide reads, in one-letter code: Ribosome maturation factor RimP (189 aa).

This sequence belongs to the RimP family.

It localises to the cytoplasm. Its function is as follows. Required for maturation of 30S ribosomal subunits. This Corynebacterium kroppenstedtii (strain DSM 44385 / JCM 11950 / CIP 105744 / CCUG 35717) protein is Ribosome maturation factor RimP.